The primary structure comprises 365 residues: Flagellar P-ring protein (365 aa).

The first 19 residues, 1–19 (MFKALAGIVLALVATLAHA), serve as a signal peptide directing secretion.

The protein belongs to the FlgI family. In terms of assembly, the basal body constitutes a major portion of the flagellar organelle and consists of four rings (L,P,S, and M) mounted on a central rod.

It localises to the periplasm. It is found in the bacterial flagellum basal body. Assembles around the rod to form the L-ring and probably protects the motor/basal body from shearing forces during rotation. This chain is Flagellar P-ring protein, found in Salmonella heidelberg (strain SL476).